The primary structure comprises 308 residues: Cytochrome b (308 aa).

Helical transmembrane passes span 1-21 (SGSLLGMCLIVRIITGLFLAA), 45-66 (WLIRNLHANGASLFFICIYLHI), 81-101 (WNIGVILLLALMATAFVGYVL), and 146-166 (FFALHFLLPFVIAGLTLVHLT). H51 and H65 together coordinate heme b. Heme b is bound by residues H150 and H164. H169 contacts a ubiquinone. A run of 3 helical transmembrane segments spans residues 194-214 (TKDVLGFALLLTPLIALALFS), 256-276 (LGGVLALAASVLVLFLIPLLH), and 288-308 (LSQILFWALVANLLVLTWVGS).

Belongs to the cytochrome b family. In terms of assembly, the cytochrome bc1 complex contains 11 subunits: 3 respiratory subunits (MT-CYB, CYC1 and UQCRFS1), 2 core proteins (UQCRC1 and UQCRC2) and 6 low-molecular weight proteins (UQCRH/QCR6, UQCRB/QCR7, UQCRQ/QCR8, UQCR10/QCR9, UQCR11/QCR10 and a cleavage product of UQCRFS1). This cytochrome bc1 complex then forms a dimer. Requires heme b as cofactor.

Its subcellular location is the mitochondrion inner membrane. Component of the ubiquinol-cytochrome c reductase complex (complex III or cytochrome b-c1 complex) that is part of the mitochondrial respiratory chain. The b-c1 complex mediates electron transfer from ubiquinol to cytochrome c. Contributes to the generation of a proton gradient across the mitochondrial membrane that is then used for ATP synthesis. In Garritornis isidorei (Papuan babbler), this protein is Cytochrome b (MT-CYB).